Consider the following 185-residue polypeptide: Avirulence protein ATR39-1 (185 aa).

An N-terminal signal peptide occupies residues 1 to 20 (MVKCTPLLALTVIVSAGSDA). The RxLR-dEER motif lies at 49–66 (RVLRASDVPDEVAAGESR).

This sequence belongs to the RxLR effector family.

The protein localises to the secreted. The protein resides in the host cell. Its function is as follows. Secreted effector that acts as an elicitor of hypersensitive response (HR) specifically on plants carrying defense protein RPP39. The allele ATR39-1 is recognized by RPP39, whereas the ATR39-2 allele is not recognized. In Hyaloperonospora arabidopsidis (strain Emoy2) (Downy mildew agent), this protein is Avirulence protein ATR39-1.